The primary structure comprises 106 residues: Large ribosomal subunit protein bL21 (106 aa).

It belongs to the bacterial ribosomal protein bL21 family. Part of the 50S ribosomal subunit. Contacts protein L20.

This protein binds to 23S rRNA in the presence of protein L20. This Streptomyces coelicolor (strain ATCC BAA-471 / A3(2) / M145) protein is Large ribosomal subunit protein bL21.